A 123-amino-acid chain; its full sequence is Small ribosomal subunit protein uS12 (123 aa).

The tract at residues 1–30 (MPTIQQLIRKPRQPKVQRSKSQHLQSCPQK) is disordered. The segment covering 9-21 (RKPRQPKVQRSKS) has biased composition (basic residues). Position 89 is a 3-methylthioaspartic acid (D89).

Belongs to the universal ribosomal protein uS12 family. Part of the 30S ribosomal subunit. Contacts proteins S8 and S17. May interact with IF1 in the 30S initiation complex.

In terms of biological role, with S4 and S5 plays an important role in translational accuracy. Functionally, interacts with and stabilizes bases of the 16S rRNA that are involved in tRNA selection in the A site and with the mRNA backbone. Located at the interface of the 30S and 50S subunits, it traverses the body of the 30S subunit contacting proteins on the other side and probably holding the rRNA structure together. The combined cluster of proteins S8, S12 and S17 appears to hold together the shoulder and platform of the 30S subunit. This Paracoccus denitrificans (strain Pd 1222) protein is Small ribosomal subunit protein uS12.